The sequence spans 318 residues: Carnitine monooxygenase reductase subunit (318 aa).

The 103-residue stretch at 5–107 (YEMFPAVVTR…SEPKNLFPLA (103 aa)) folds into the FAD-binding FR-type domain. The 2Fe-2S ferredoxin-type domain maps to 233-318 (FTVVLAKSNQ…AKGKKLVLDL (86 aa)). [2Fe-2S] cluster contacts are provided by C267, C272, C275, and C305.

The protein belongs to the PDR/VanB family. CntB subfamily. Composed of an oxygenase subunit (cntA) and a reductase subunit (cntB). The cofactor is FMN. It depends on [2Fe-2S] cluster as a cofactor.

It catalyses the reaction (R)-carnitine + NADH + O2 + H(+) = (3R)-3-hydroxy-4-oxobutanoate + trimethylamine + NAD(+) + H2O. It carries out the reaction (R)-carnitine + NADPH + O2 + H(+) = (3R)-3-hydroxy-4-oxobutanoate + trimethylamine + NADP(+) + H2O. Its pathway is amine and polyamine metabolism; carnitine metabolism. In terms of biological role, converts carnitine to trimethylamine and malic semialdehyde. This chain is Carnitine monooxygenase reductase subunit, found in Acinetobacter baumannii (strain ATCC 19606 / DSM 30007 / JCM 6841 / CCUG 19606 / CIP 70.34 / NBRC 109757 / NCIMB 12457 / NCTC 12156 / 81).